The primary structure comprises 1270 residues: Myosin-binding protein C, cardiac-type (1270 aa).

The residue at position 1 (Met-1) is an N-acetylmethionine. The disordered stretch occupies residues 1 to 24 (MPEPGKKPVSAFNKKPRSAEVTAG). Ser-47 and Ser-72 each carry phosphoserine. Positions 94–105 (VTEPAPPEKAES) are enriched in basic and acidic residues. A disordered region spans residues 94–152 (VTEPAPPEKAESEVAPGAPEEVPAPATELEESVSSPEGSVSVTQDGSAAEHQGAPDDPI). Low complexity predominate over residues 106 to 135 (EVAPGAPEEVPAPATELEESVSSPEGSVSV). Residues 151 to 254 (PIGLFLMRPQ…FDSCNFNLTV (104 aa)) form the Ig-like C2-type 1 domain. Zn(2+) contacts are provided by Gln-206, His-208, Glu-221, and His-223. Phosphoserine; by PKA and PKC is present on residues Ser-273, Ser-282, and Ser-302. Phosphoserine occurs at positions 307 and 423. 4 Ig-like C2-type domains span residues 358–448 (STAF…VKEP), 449–539 (PVLI…VQEK), 540–629 (KLEV…HFME), and 641–767 (PKIH…VIDV). An intrachain disulfide couples Cys-432 to Cys-439. Ser-455 and Ser-546 each carry phosphoserine. The residue at position 603 (Thr-603) is a Phosphothreonine. Residues 683–702 (VTQGKKASAGPHPDAPEDAG) form a disordered region. Fibronectin type-III domains lie at 770 to 866 (APAA…IGPP) and 868 to 963 (EPTH…VQEI). One can recognise an Ig-like C2-type 6 domain in the interval 967–1061 (PRLQLPRHLR…ATLILQIVDK (95 aa)). The Fibronectin type-III 3 domain maps to 1064 to 1159 (PPQDIRIVET…TKEPVFIPRP (96 aa)). An Ig-like C2-type 7 domain is found at 1177–1270 (PSFTQPLANR…ECRLEVRVPQ (94 aa)). The residue at position 1237 (Arg-1237) is an Omega-N-methylarginine.

It belongs to the immunoglobulin superfamily. MyBP family. Post-translationally, substrate for phosphorylation by PKA and PKC. Reversible phosphorylation appears to modulate contraction. Polyubiquitinated.

Functionally, thick filament-associated protein located in the crossbridge region of vertebrate striated muscle a bands. In vitro it binds MHC, F-actin and native thin filaments, and modifies the activity of actin-activated myosin ATPase. It may modulate muscle contraction or may play a more structural role. This is Myosin-binding protein C, cardiac-type (Mybpc3) from Mus musculus (Mouse).